The sequence spans 388 residues: Pregnancy-associated glycoprotein (388 aa).

A signal peptide spans 1 to 15; the sequence is MKWFGVLGLVTLSEC. Positions 74-385 constitute a Peptidase A1 domain; sequence YMGIISVGTP…DRENDRIGLA (312 aa). Residue Asp92 is part of the active site. Cystine bridges form between Cys105-Cys110 and Cys266-Cys270. The active site involves Asp275. Cys309 and Cys344 are oxidised to a cystine. Asn356 is a glycosylation site (N-linked (GlcNAc...) asparagine).

It belongs to the peptidase A1 family. In terms of tissue distribution, trophoblast and placental tissue.

Its subcellular location is the secreted. The protein localises to the extracellular space. The chain is Pregnancy-associated glycoprotein (PAG) from Equus caballus (Horse).